A 638-amino-acid polypeptide reads, in one-letter code: Sodium- and chloride-dependent glycine transporter 1 (638 aa).

The tract at residues 1–30 (MAVAHGPVATSSPEQNGAVPSEATKKDQNL) is disordered. Residues 1–40 (MAVAHGPVATSSPEQNGAVPSEATKKDQNLTRGNWGNQIE) are Cytoplasmic-facing. The next 3 helical transmembrane spans lie at 41-61 (FVLT…FPYL), 68-88 (GAFM…LFFM), and 120-140 (VSTY…YYFF). The Extracellular segment spans residues 141–217 (SSMTHVLPWA…LSDDIGDFGE (77 aa)). N-linked (GlcNAc...) asparagine glycans are attached at residues asparagine 169, asparagine 172, asparagine 182, and asparagine 188. 9 consecutive transmembrane segments (helical) span residues 218 to 238 (VRLP…LCLI), 247 to 267 (VVYF…VRGV), 292 to 312 (VWGD…GGLI), 339 to 359 (SVYA…HLGV), 382 to 402 (LLPI…LLGL), 438 to 458 (VAGF…WLLL), 462 to 482 (YAAS…IMYI), 502 to 522 (LFFQ…ILIF), and 542 to 562 (VAIG…YALF). At 563–638 (QLCRTDGDTL…GSSRLQDSRI (76 aa)) the chain is on the cytoplasmic side. Position 603 is a phosphothreonine (threonine 603). Serine 605 and serine 630 each carry phosphoserine. An essential for interaction with EXOC1 region spans residues 627 to 638 (SNGSSRLQDSRI).

The protein belongs to the sodium:neurotransmitter symporter (SNF) (TC 2.A.22) family. SLC6A9 subfamily. In terms of assembly, interacts with EXOC1; interaction increases the transporter capacity of SLC6A9 probably by promoting its insertion into the cell membrane. Interacts with EXOC3 and EXOC4. Found only in the white matter of the CNS. In terms of tissue distribution, found in the gray matter of CNS as well as in macrophages and mast cells in peripheral tissues.

Its subcellular location is the cell membrane. The catalysed reaction is glycine(out) + chloride(out) + 2 Na(+)(out) = glycine(in) + chloride(in) + 2 Na(+)(in). Its activity is regulated as follows. Inhibited by sarcosine. In terms of biological role, sodium- and chloride-dependent glycine transporter. Essential for regulating glycine concentrations at inhibitory glycinergic synapses. In Rattus norvegicus (Rat), this protein is Sodium- and chloride-dependent glycine transporter 1 (Slc6a9).